A 335-amino-acid chain; its full sequence is Oligopeptide transport ATP-binding protein OppD (335 aa).

One can recognise an ABC transporter domain in the interval Leu18–Leu267. ATP is bound at residue Gly54–Ser61.

It belongs to the ABC transporter superfamily. As to quaternary structure, the complex is composed of two ATP-binding proteins (OppD and OppF), two transmembrane proteins (OppB and OppC) and a solute-binding protein (OppA).

Its subcellular location is the cell inner membrane. The enzyme catalyses a [peptide](out) + ATP + H2O = a [peptide](in) + ADP + phosphate + H(+). The catalysed reaction is L-alanyl-gamma-D-glutamyl-meso-2,6-diaminopimelate(out) + ATP + H2O = L-alanyl-gamma-D-glutamyl-meso-2,6-diaminopimelate(in) + ADP + phosphate + H(+). Functionally, part of the ABC transporter complex OppABCDF involved in the uptake of oligopeptides, including the cell wall murein tripeptide L-alanyl-gamma-D-glutamyl-meso-diaminopimelate. Responsible for energy coupling to the transport system. Plays an important nutritional role and is involved in the recycling of cell wall peptides. Binds ATP. This Salmonella typhimurium (strain LT2 / SGSC1412 / ATCC 700720) protein is Oligopeptide transport ATP-binding protein OppD.